The primary structure comprises 183 residues: dTTP/UTP pyrophosphatase (183 aa).

The active-site Proton acceptor is the Asp64.

It belongs to the Maf family. YhdE subfamily. The cofactor is a divalent metal cation.

It localises to the cytoplasm. The catalysed reaction is dTTP + H2O = dTMP + diphosphate + H(+). It carries out the reaction UTP + H2O = UMP + diphosphate + H(+). Its function is as follows. Nucleoside triphosphate pyrophosphatase that hydrolyzes dTTP and UTP. May have a dual role in cell division arrest and in preventing the incorporation of modified nucleotides into cellular nucleic acids. This Acinetobacter baylyi (strain ATCC 33305 / BD413 / ADP1) protein is dTTP/UTP pyrophosphatase.